Consider the following 275-residue polypeptide: Transmembrane protein 202 (275 aa).

Helical transmembrane passes span 60–80 (SGFS…QFLV), 116–136 (ALFL…LSSC), 151–171 (VSML…LFLA), and 193–213 (WCSE…FITF).

The protein resides in the membrane. The sequence is that of Transmembrane protein 202 (Tmem202) from Mus musculus (Mouse).